A 148-amino-acid chain; its full sequence is Hemoglobin subunit gamma (148 aa).

The region spanning histidine 3–histidine 148 is the Globin domain. Histidine 64 and histidine 93 together coordinate heme b.

It belongs to the globin family. Heterotetramer of two alpha chains and two gamma chains in fetal hemoglobin (Hb F). As to expression, red blood cells.

Gamma chains make up the fetal hemoglobin F, in combination with alpha chains. The sequence is that of Hemoglobin subunit gamma (HBG) from Carlito syrichta (Philippine tarsier).